Consider the following 571-residue polypeptide: Proline--tRNA ligase (571 aa).

Belongs to the class-II aminoacyl-tRNA synthetase family. ProS type 1 subfamily. As to quaternary structure, homodimer.

It localises to the cytoplasm. The enzyme catalyses tRNA(Pro) + L-proline + ATP = L-prolyl-tRNA(Pro) + AMP + diphosphate. Functionally, catalyzes the attachment of proline to tRNA(Pro) in a two-step reaction: proline is first activated by ATP to form Pro-AMP and then transferred to the acceptor end of tRNA(Pro). As ProRS can inadvertently accommodate and process non-cognate amino acids such as alanine and cysteine, to avoid such errors it has two additional distinct editing activities against alanine. One activity is designated as 'pretransfer' editing and involves the tRNA(Pro)-independent hydrolysis of activated Ala-AMP. The other activity is designated 'posttransfer' editing and involves deacylation of mischarged Ala-tRNA(Pro). The misacylated Cys-tRNA(Pro) is not edited by ProRS. This is Proline--tRNA ligase from Buchnera aphidicola subsp. Schizaphis graminum (strain Sg).